The following is a 931-amino-acid chain: G patch domain-containing protein 1 (931 aa).

Disordered stretches follow at residues 1 to 41 (MAAR…TVRD), 73 to 92 (PSTF…LGPE), and 169 to 209 (QGVG…EDDD). N-acetylalanine is present on A2. Phosphoserine occurs at positions 6 and 8. The G-patch domain maps to 152–198 (KLSVGFELLRKMGWKEGQGVGPRVKRRPRRQKPDPGVKIYGCALPPG). A Glycyl lysine isopeptide (Lys-Gly) (interchain with G-Cter in SUMO2) cross-link involves residue K312. 2 positions are modified to phosphoserine: S357 and S477. Disordered regions lie at residues 568-595 (RFTH…GDKQ) and 659-931 (LPTT…LRRQ). A compositionally biased stretch (basic and acidic residues) spans 582 to 593 (EVPRDQENDVGD). Over residues 659 to 668 (LPTTQASSEK) the composition is skewed to polar residues. Positions 669 to 695 (VSQHRGPDKSRKPSRWDTSKHEKKEDS) are enriched in basic and acidic residues. Residue S715 is modified to Phosphoserine. Acidic residues predominate over residues 769-780 (SEDEQGDSEDDQ). A compositionally biased stretch (polar residues) spans 786 to 802 (ANFQSSQDTDLGETSSV). Over residues 852-888 (EKHKKNKDKHKAKKEHRRKKEKKKKHRKHKHKGKQKN) the composition is skewed to basic residues. A compositionally biased stretch (low complexity) spans 896 to 905 (SSESSDSSDS). The segment covering 922–931 (RLKSLPLRRQ) has biased composition (basic residues).

It belongs to the GPATCH1 family.

The chain is G patch domain-containing protein 1 (GPATCH1) from Homo sapiens (Human).